Consider the following 539-residue polypeptide: Eukaryotic translation initiation factor 3 subunit L (539 aa).

The region spanning 306-514 (TFSDILLYIQ…IHIADTKVSH (209 aa)) is the PCI domain.

It belongs to the eIF-3 subunit L family. Component of the eukaryotic translation initiation factor 3 (eIF-3) complex. The eIF-3 complex interacts with pix.

The protein resides in the cytoplasm. In terms of biological role, component of the eukaryotic translation initiation factor 3 (eIF-3) complex, which is involved in protein synthesis of a specialized repertoire of mRNAs and, together with other initiation factors, stimulates binding of mRNA and methionyl-tRNAi to the 40S ribosome. The eIF-3 complex specifically targets and initiates translation of a subset of mRNAs involved in cell proliferation. This is Eukaryotic translation initiation factor 3 subunit L from Drosophila yakuba (Fruit fly).